We begin with the raw amino-acid sequence, 514 residues long: Peptide chain release factor 3 (514 aa).

The 261-residue stretch at 8-268 folds into the tr-type G domain; the sequence is KKRRTFAIIS…IFLKFAPEPH (261 aa). Residues 17 to 24, 85 to 89, and 139 to 142 each bind GTP; these read SHPDAGKT, DTPGH, and NKLD.

Belongs to the TRAFAC class translation factor GTPase superfamily. Classic translation factor GTPase family. PrfC subfamily.

Its subcellular location is the cytoplasm. Its function is as follows. Increases the formation of ribosomal termination complexes and stimulates activities of RF-1 and RF-2. It binds guanine nucleotides and has strong preference for UGA stop codons. It may interact directly with the ribosome. The stimulation of RF-1 and RF-2 is significantly reduced by GTP and GDP, but not by GMP. The chain is Peptide chain release factor 3 from Streptococcus pneumoniae (strain CGSP14).